A 533-amino-acid chain; its full sequence is Nuclear receptor corepressor 1 (533 aa).

A compositionally biased stretch (basic and acidic residues) spans 1–17 (KDKGPPPKSRYEEELRT). The segment at 1–21 (KDKGPPPKSRYEEELRTRGKT) is disordered. Residues 29 to 33 (IDVII) carry the CORNR box 1 motif. Positions 37–144 (IASDKDARER…EGMGQVPRTH (108 aa)) are disordered. Positions 38-47 (ASDKDARERG) are enriched in basic and acidic residues. Residues 48–59 (SQSSDSSSSLSS) are compositionally biased toward low complexity. A phosphoserine mark is found at S73 and S77. Positions 130 to 209 (PSSQAEGMGQ…QSQTVLHPRP (80 aa)) are ID1. Positions 145–148 (RLIT) are required for interaction with RARA in the absence of its ligand. The CORNR box 2 signature appears at 153–157 (ICQII). A compositionally biased stretch (low complexity) spans 165 to 180 (QVPSQPSTSTFQTSPS). The segment at 165-254 (QVPSQPSTST…SPPQGPAVHE (90 aa)) is disordered. Polar residues predominate over residues 181–204 (ALSSTPVRTKPSSRYSPESQSQTV). Phosphoserine occurs at positions 196, 214, 230, 245, and 278. Basic and acidic residues predominate over residues 218–236 (LVDKSRGSRPGKSPERSHI). The ID2 stretch occupies residues 306-367 (IFRKLNSSGG…EDIIRKALMG (62 aa)). A CORNR box 3 motif is present at residues 357–361 (LEDII). A compositionally biased stretch (low complexity) spans 382-399 (HPVGVVPGSASTSVVTSS). Residues 382–476 (HPVGVVPGSA…RPSSTGSTQF (95 aa)) form a disordered region. T492 bears the Phosphothreonine mark. A phosphoserine mark is found at S529 and S531.

This sequence belongs to the N-CoR nuclear receptor corepressors family. As to quaternary structure, forms a large corepressor complex that contains SIN3A/B and histone deacetylases HDAC1 and HDAC2. This complex associates with the thyroid receptor (TR) and the retinoid acid receptor (RAR) in the absence of ligand. Interacts directly with RARA; the interaction is facilitated with RARA trimethylation. Component of the N-Cor repressor complex, at least composed of CBFA2T3, HEXIM1, NCOR1, NCOR2, HDAC3, TBL1X, TBL1XR1, CORO2A and GPS2. Interacts with ZBTB33; the interaction serves to recruit the N-CoR complex to promoter regions containing methylated CpG dinucleotides. Interacts with TRIM28 and KDM3A. Interacts (via the RD1 domain) with BAZ1A (via its N-terminal); the interaction corepresses a number of NCOR1-regulated genes. Interacts with BCL6, C1D, DACH1, HEXIM1, HDAC7, RORA, RORC, SAP30, SIAH2, SIN3A and SIN3B. May interact with DEAF1. Interacts with RXRA. Interacts with SETD5. Interacts with VDR. Interacts with ZBTB7A. Interacts with AR. Interacts with HDAC3. In terms of processing, ubiquitinated; mediated by SIAH2 and leading to its subsequent proteasomal degradation.

The protein localises to the nucleus. Its function is as follows. Mediates transcriptional repression by certain nuclear receptors. Part of a complex which promotes histone deacetylation and the formation of repressive chromatin structures which may impede the access of basal transcription factors. Participates in the transcriptional repressor activity produced by BCL6. Recruited by ZBTB7A to the androgen response elements/ARE on target genes, negatively regulates androgen receptor signaling and androgen-induced cell proliferation. Mediates the NR1D1-dependent repression and circadian regulation of TSHB expression. The NCOR1-HDAC3 complex regulates the circadian expression of the core clock gene ARTNL/BMAL1 and the genes involved in lipid metabolism in the liver. The chain is Nuclear receptor corepressor 1 (Ncor1) from Rattus norvegicus (Rat).